The following is a 214-amino-acid chain: GTP cyclohydrolase 1 (214 aa).

3 residues coordinate Zn(2+): C108, H111, and C179.

Belongs to the GTP cyclohydrolase I family. As to quaternary structure, toroid-shaped homodecamer, composed of two pentamers of five dimers.

It carries out the reaction GTP + H2O = 7,8-dihydroneopterin 3'-triphosphate + formate + H(+). It participates in cofactor biosynthesis; 7,8-dihydroneopterin triphosphate biosynthesis; 7,8-dihydroneopterin triphosphate from GTP: step 1/1. This is GTP cyclohydrolase 1 from Shewanella loihica (strain ATCC BAA-1088 / PV-4).